A 433-amino-acid polypeptide reads, in one-letter code: Chaperone SurA (433 aa).

An N-terminal signal peptide occupies residues 1-24 (MKYRIKALLLASSLIITTITSVQA). PpiC domains follow at residues 175 to 276 (NVEY…KVLD) and 285 to 384 (VEEV…KLED).

It is found in the periplasm. It carries out the reaction [protein]-peptidylproline (omega=180) = [protein]-peptidylproline (omega=0). Its function is as follows. Chaperone involved in the correct folding and assembly of outer membrane proteins. Recognizes specific patterns of aromatic residues and the orientation of their side chains, which are found more frequently in integral outer membrane proteins. May act in both early periplasmic and late outer membrane-associated steps of protein maturation. The polypeptide is Chaperone SurA (Colwellia psychrerythraea (strain 34H / ATCC BAA-681) (Vibrio psychroerythus)).